The primary structure comprises 2131 residues: Sodium channel protein para (2131 aa).

The Cytoplasmic segment spans residues 1-148 (MTEDSDSISE…FNPIRRVAIY (148 aa)). The segment covering 35 to 48 (HEKQKELERKRAEG) has biased composition (basic and acidic residues). Positions 35 to 84 (HEKQKELERKRAEGEVPQYGRKKKQKEIRYDDEDEDEGPQPDPTLEQGVP) are disordered. Residues 64 to 73 (YDDEDEDEGP) are compositionally biased toward acidic residues. The I repeat unit spans residues 134-467 (WMLDPFNPIR…AAKAAKLEER (334 aa)). Residues 149 to 172 (ILVHPLFSLFIITTILVNCILMIM) form a helical membrane-spanning segment. Residues 173–180 (PTTPTVES) are Extracellular-facing. Residues 181–199 (TEVIFTGIYTFESAVKVMA) form a helical membrane-spanning segment. The Cytoplasmic portion of the chain corresponds to 200 to 212 (RGFILCPFTYLRD). The chain crosses the membrane as a helical span at residues 213–231 (AWNWLDFVVIALAYVTMGI). Residues 232 to 237 (DLGNLA) lie on the Extracellular side of the membrane. The helical; Voltage-sensor transmembrane segment at 238 to 257 (ALRTFRVLRALKTVAIVPGL) threads the bilayer. The Cytoplasmic portion of the chain corresponds to 258–273 (KTIVGAVIESVKNLRD). A helical membrane pass occupies residues 274–297 (VIILTMFSLSVFALMGLQIYMGVL). Residues 298-373 (TQKCIKKFPL…PNYGYTSFDS (76 aa)) lie on the Extracellular side of the membrane. A disulfide bridge links Cys-301 with Cys-350. 3 N-linked (GlcNAc...) asparagine glycosylation sites follow: Asn-313, Asn-325, and Asn-343. The segment at residues 374–398 (FGWAFLSAFRLMTQDFWEDLYQLVL) is an intramembrane region (pore-forming). Residues 399–405 (RAAGPWH) are Extracellular-facing. A helical membrane pass occupies residues 406-427 (MLFFIVIIFLGSFYLVNLILAI). The Cytoplasmic portion of the chain corresponds to 428-812 (VAMSYDELQK…VWLKFQEWVS (385 aa)). 2 positions are modified to phosphoserine; by PKA: Ser-553 and Ser-570. Disordered regions lie at residues 553 to 572 (STTS…GSRS) and 671 to 691 (KESK…TNGG). Over residues 680-691 (TRNQSVGATNGG) the composition is skewed to polar residues. One copy of the II repeat lies at 799–1069 (DCCWVWLKFQ…IAEAFNRIGR (271 aa)). A helical transmembrane segment spans residues 813–837 (LIVFDPFVELFITLCIVVNTMFMAM). At 838 to 848 (DHHDMNKEMER) the chain is on the extracellular side. Residues 849–873 (VLKSGNYFFTATFAIEATMKLMAMS) form a helical membrane-spanning segment. Residues 874–880 (PKYYFQE) are Cytoplasmic-facing. Residues 881–900 (GWNIFDFIIVALSLLELGLE) traverse the membrane as a helical segment. Residues 901–906 (GVQGLS) are Extracellular-facing. A helical; Voltage-sensor transmembrane segment spans residues 907 to 926 (VLRSFRLLRVFKLAKSWPTL). At 927 to 941 (NLLISIMGRTMGALG) the chain is on the cytoplasmic side. A helical membrane pass occupies residues 942-963 (NLTFVLCIIIFIFAVMGMQLFG). The Extracellular portion of the chain corresponds to 964-985 (KNYHDHKDRFPDGDLPRWNFTD). Asn-982 is a glycosylation site (N-linked (GlcNAc...) asparagine). Residues 986-1006 (FMHSFMIVFRVLCGEWIESMW) constitute an intramembrane region (pore-forming). Over 1007-1013 (DCMYVGD) the chain is Extracellular. A disulfide bond links Cys-1008 and Cys-1016. Residues 1014 to 1041 (VSCIPFFLATVVIGNLVVLNLFLALLLS) form a helical membrane-spanning segment. At 1042-1296 (NFGSSSLSAP…WGNLRLKTFQ (255 aa)) the chain is on the cytoplasmic side. Residues 1166–1240 (DMKNNKPKKS…LDEEGECEEG (75 aa)) are disordered. The segment covering 1177–1194 (YLNNATDDDTASINSYGS) has biased composition (polar residues). The segment covering 1199–1225 (PFKDESHKGSAETMEGEEKRDASKEDL) has biased composition (basic and acidic residues). The span at 1226 to 1240 (GLDEELDEEGECEEG) shows a compositional bias: acidic residues. The III repeat unit spans residues 1284–1591 (WQGWGNLRLK…QKKYYNAMKK (308 aa)). The chain crosses the membrane as a helical span at residues 1297–1320 (LIENKYFETAVITMILMSSLALAL). The Extracellular segment spans residues 1321 to 1334 (EDVHLPQRPILQDI). The chain crosses the membrane as a helical span at residues 1335–1359 (LYYMDRIFTVIFFLEMLIKWLALGF). The Cytoplasmic portion of the chain corresponds to 1360 to 1365 (KVYFTN). The helical transmembrane segment at 1366–1387 (AWCWLDFVIVMVSLINFVASLV) threads the bilayer. Over 1388-1391 (GAGG) the chain is Extracellular. The helical; Voltage-sensor transmembrane segment at 1392 to 1413 (IQAFKTMRTLRALRPLRAMSRM) threads the bilayer. Topologically, residues 1414 to 1432 (QGMRVVVNALVQAIPSIFN) are cytoplasmic. Residues 1433-1454 (VLLVCLIFWLIFAIMGVQLFAG) form a helical membrane-spanning segment. Residues 1455 to 1495 (KYFKCEDMNGTKLSHEIIPNRNACESENYTWVNSAMNFDHV) lie on the Extracellular side of the membrane. 2 N-linked (GlcNAc...) asparagine glycosylation sites follow: Asn-1463 and Asn-1482. The segment at residues 1496–1517 (GNAYLCLFQVATFKGWIQIMND) is an intramembrane region (pore-forming). Over 1518–1533 (AIDSREVDKQPIRETN) the chain is Extracellular. The chain crosses the membrane as a helical span at residues 1534–1560 (IYMYLYFVFFIIFGSFFTLNLFIGVII). Residues 1561-1614 (DNFNEQKKKAGGSLEMFMTEDQKKYYNAMKKMGSKKPLKAIPRPRWRPQAIVFE) are Cytoplasmic-facing. One copy of the IV repeat lies at 1601–1862 (IPRPRWRPQA…NMYIAVILEN (262 aa)). A helical membrane pass occupies residues 1615 to 1638 (IVTDKKFDIIIMLFIGLNMFTMTL). At 1639–1649 (DRYDASDTYNA) the chain is on the extracellular side. A helical membrane pass occupies residues 1650-1673 (VLDYLNAIFVVIFSSECLLKIFAL). The Cytoplasmic segment spans residues 1674-1679 (RYHYFI). The chain crosses the membrane as a helical span at residues 1680–1703 (EPWNLFDVVVVILSILGLVLSDII). Residues 1704-1713 (EKYFVSPTLL) are Extracellular-facing. The helical; Voltage-sensor transmembrane segment at 1714 to 1735 (RVVRVAKVGRVLRLVKGAKGIR) threads the bilayer. Residues 1736–1750 (TLLFALAMSLPALFN) are Cytoplasmic-facing. The helical transmembrane segment at 1751–1773 (ICLLLFLVMFIFAIFGMSFFMHV) threads the bilayer. The Extracellular segment spans residues 1774–1787 (KEKSGINDVYNFKT). The segment at residues 1788 to 1810 (FGQSMILLFQMSTSAGWDGVLDA) is an intramembrane region (pore-forming). The Extracellular segment spans residues 1811–1835 (IINEEACDPPDNDKGYPGNCGSATV). The chain crosses the membrane as a helical span at residues 1836 to 1860 (GITFLLSYLVISFLIVINMYIAVIL). Topologically, residues 1861–2131 (ENYSQATEDV…PSITSRTADV (271 aa)) are cytoplasmic. The region spanning 1877–1912 (DDYDMYYEIWQQFDPEGTQYIRYDQLSEFLDVLEPP) is the EF-hand domain. The tract at residues 2001-2096 (HKARGEGGGS…GSPGAGSAGR (96 aa)) is disordered. Positions 2021-2035 (GDPDAGDPAPDEATD) are enriched in acidic residues. Positions 2068-2088 (AAAAAAAAAAAAAAGTTTAGS) are enriched in low complexity.

This sequence belongs to the sodium channel (TC 1.A.1.10) family. Para subfamily.

Its subcellular location is the cell membrane. Functionally, mediates the voltage-dependent sodium ion permeability of excitable membranes. Assuming opened or closed conformations in response to the voltage difference across the membrane, the protein forms a sodium-selective channel through which Na(+) ions may pass in accordance with their electrochemical gradient. The sequence is that of Sodium channel protein para (para) from Drosophila melanogaster (Fruit fly).